The following is a 524-amino-acid chain: Serine/threonine-protein kinase PAK 2 (524 aa).

The tract at residues 1–81 (MSDNGELEDK…PEISPPSDFE (81 aa)) is disordered. Ser-2 carries the post-translational modification N-acetylserine. 4 positions are modified to phosphoserine: Ser-2, Ser-20, Ser-55, and Ser-58. Thr-60 carries the phosphothreonine modification. Lys-62 carries the N6-acetyllysine modification. Residue Ser-64 is modified to Phosphoserine. Positions 67 to 81 (KEKERPEISPPSDFE) are enriched in basic and acidic residues. Residues 69 to 112 (KERPEISPPSDFEHTIHVGFDAVTGEFTGMPEQWARLLQTSNIT) form a GTPase-binding region. The autoregulatory region stretch occupies residues 69–137 (KERPEISPPS…KFYDSNTVKQ (69 aa)). The region spanning 74–87 (ISPPSDFEHTIHVG) is the CRIB domain. Residue Lys-128 is modified to N6-acetyllysine. The residue at position 134 (Thr-134) is a Phosphothreonine. Tyr-139 carries the post-translational modification Phosphotyrosine. Ser-141 carries the phosphoserine modification. Position 143 is a phosphothreonine (Thr-143). Disordered stretches follow at residues 143 to 164 (TPPE…GTEA) and 169 to 188 (TEEE…PRPD). Ser-152 carries the phosphoserine modification. Phosphothreonine is present on residues Thr-154 and Thr-169. The span at 169-178 (TEEEDDDEET) shows a compositional bias: acidic residues. Phosphoserine is present on Ser-197. Gly-213 carries N-myristoyl glycine; in form PAK-2p34 lipidation. Positions 245-251 (PKKKYTR) match the Nuclear localization signal motif. Residues 249-499 (YTRYEKIGQG…SAKELLQHPF (251 aa)) enclose the Protein kinase domain. ATP is bound by residues 255–263 (IGQGASGTV) and Lys-278. Arg-367 functions as the Proton acceptor in the catalytic mechanism. A Phosphothreonine; by autocatalysis modification is found at Thr-402.

Belongs to the protein kinase superfamily. STE Ser/Thr protein kinase family. STE20 subfamily. As to quaternary structure, interacts tightly with GTP-bound but not GDP-bound CDC42/p21 and RAC1. Interacts with SH3MD4. Interacts with SCRIB. Interacts with ARHGEF7 and GIT1. PAK-2p34 interacts with ARHGAP10. (Microbial infection) Interacts with and activated by HIV-1 Nef. In terms of processing, full-length PAK2 is autophosphorylated when activated by CDC42/p21. Following cleavage, both peptides, PAK-2p27 and PAK-2p34, become highly autophosphorylated, with PAK-2p27 being phosphorylated on serine and PAK-2p34 on threonine residues, respectively. Autophosphorylation of PAK-2p27 can occur in the absence of any effectors and is dependent on phosphorylation of Thr-402, because PAK-2p27 is acting as an exogenous substrate. Post-translationally, during apoptosis proteolytically cleaved by caspase-3 or caspase-3-like proteases to yield active PAK-2p34. Ubiquitinated, leading to its proteasomal degradation. In terms of processing, PAK-2p34 is myristoylated. As to expression, ubiquitously expressed. Higher levels seen in skeletal muscle, ovary, thymus and spleen.

Its subcellular location is the cytoplasm. The protein localises to the nucleus. It is found in the perinuclear region. The protein resides in the membrane. It carries out the reaction L-seryl-[protein] + ATP = O-phospho-L-seryl-[protein] + ADP + H(+). The catalysed reaction is L-threonyl-[protein] + ATP = O-phospho-L-threonyl-[protein] + ADP + H(+). Activated by binding small G proteins. Binding of GTP-bound CDC42 or RAC1 to the autoregulatory region releases monomers from the autoinhibited dimer, enables phosphorylation of Thr-402 and allows the kinase domain to adopt an active structure. Following caspase cleavage, autophosphorylated PAK-2p34 is constitutively active. Its function is as follows. Serine/threonine protein kinase that plays a role in a variety of different signaling pathways including cytoskeleton regulation, cell motility, cell cycle progression, apoptosis or proliferation. Acts as a downstream effector of the small GTPases CDC42 and RAC1. Activation by the binding of active CDC42 and RAC1 results in a conformational change and a subsequent autophosphorylation on several serine and/or threonine residues. Full-length PAK2 stimulates cell survival and cell growth. Phosphorylates MAPK4 and MAPK6 and activates the downstream target MAPKAPK5, a regulator of F-actin polymerization and cell migration. Phosphorylates JUN and plays an important role in EGF-induced cell proliferation. Phosphorylates many other substrates including histone H4 to promote assembly of H3.3 and H4 into nucleosomes, BAD, ribosomal protein S6, or MBP. Phosphorylates CASP7, thereby preventing its activity. Additionally, associates with ARHGEF7 and GIT1 to perform kinase-independent functions such as spindle orientation control during mitosis. On the other hand, apoptotic stimuli such as DNA damage lead to caspase-mediated cleavage of PAK2, generating PAK-2p34, an active p34 fragment that translocates to the nucleus and promotes cellular apoptosis involving the JNK signaling pathway. Caspase-activated PAK2 phosphorylates MKNK1 and reduces cellular translation. This Homo sapiens (Human) protein is Serine/threonine-protein kinase PAK 2 (PAK2).